The following is a 297-amino-acid chain: Probable porphobilinogen deaminase (297 aa).

An S-(dipyrrolylmethanemethyl)cysteine modification is found at Cys-241.

Belongs to the HMBS family. Requires dipyrromethane as cofactor.

It carries out the reaction 4 porphobilinogen + H2O = hydroxymethylbilane + 4 NH4(+). It participates in porphyrin-containing compound metabolism; protoporphyrin-IX biosynthesis; coproporphyrinogen-III from 5-aminolevulinate: step 2/4. Functionally, tetrapolymerization of the monopyrrole PBG into the hydroxymethylbilane pre-uroporphyrinogen in several discrete steps. In Pyrobaculum arsenaticum (strain DSM 13514 / JCM 11321 / PZ6), this protein is Probable porphobilinogen deaminase.